Reading from the N-terminus, the 231-residue chain is Large ribosomal subunit protein uL1 (231 aa).

Belongs to the universal ribosomal protein uL1 family. In terms of assembly, part of the 50S ribosomal subunit.

In terms of biological role, binds directly to 23S rRNA. The L1 stalk is quite mobile in the ribosome, and is involved in E site tRNA release. Functionally, protein L1 is also a translational repressor protein, it controls the translation of the L11 operon by binding to its mRNA. This chain is Large ribosomal subunit protein uL1, found in Pseudomonas putida (strain ATCC 700007 / DSM 6899 / JCM 31910 / BCRC 17059 / LMG 24140 / F1).